We begin with the raw amino-acid sequence, 426 residues long: uncharacterized protein (426 aa).

The protein to M.leprae L518_C2_147 and M.tuberculosis Rv1524.

This is an uncharacterized protein from Mycobacterium tuberculosis (strain CDC 1551 / Oshkosh).